The following is a 143-amino-acid chain: Small ribosomal subunit protein bS18m (143 aa).

This sequence belongs to the bacterial ribosomal protein bS18 family. Component of the mitochondrial ribosome small subunit (28S) which comprises a 12S rRNA and about 30 distinct proteins.

The protein resides in the mitochondrion. This is Small ribosomal subunit protein bS18m (MRPS18C) from Bos taurus (Bovine).